A 223-amino-acid chain; its full sequence is Pyridoxine/pyridoxamine 5'-phosphate oxidase (223 aa).

Residues 8-11 (RVDY) and K65 contribute to the substrate site. Residues 60–65 (RTVLLK), 75–76 (YT), R81, K82, and Q104 contribute to the FMN site. Residues Y122, R126, and S130 each contribute to the substrate site. FMN is bound by residues 139-140 (QS) and W188. Substrate is bound at residue 194–196 (RLH). R198 lines the FMN pocket.

The protein belongs to the pyridoxamine 5'-phosphate oxidase family. Homodimer. Requires FMN as cofactor.

It carries out the reaction pyridoxamine 5'-phosphate + O2 + H2O = pyridoxal 5'-phosphate + H2O2 + NH4(+). The enzyme catalyses pyridoxine 5'-phosphate + O2 = pyridoxal 5'-phosphate + H2O2. Its pathway is cofactor metabolism; pyridoxal 5'-phosphate salvage; pyridoxal 5'-phosphate from pyridoxamine 5'-phosphate: step 1/1. The protein operates within cofactor metabolism; pyridoxal 5'-phosphate salvage; pyridoxal 5'-phosphate from pyridoxine 5'-phosphate: step 1/1. Functionally, catalyzes the oxidation of either pyridoxine 5'-phosphate (PNP) or pyridoxamine 5'-phosphate (PMP) into pyridoxal 5'-phosphate (PLP). This is Pyridoxine/pyridoxamine 5'-phosphate oxidase from Kineococcus radiotolerans (strain ATCC BAA-149 / DSM 14245 / SRS30216).